Here is a 394-residue protein sequence, read N- to C-terminus: Protein NDRG1 (394 aa).

Serine 2 carries the N-acetylserine modification. Phosphoserine is present on residues serine 2, serine 319, and serine 326. Residues 325–394 (RSRTASGSSV…AGPKSMEVSC (70 aa)) form a disordered region. Positions 327–339 (RTASGSSVTSLEG) are enriched in polar residues. The residue at position 328 (threonine 328) is a Phosphothreonine. The residue at position 330 (serine 330) is a Phosphoserine; by SGK1. A phosphoserine mark is found at serine 332 and serine 333. Threonine 335 is modified (phosphothreonine). Serine 336 is subject to Phosphoserine. 3 consecutive repeat copies span residues 339 to 348 (GTRSRSHTSE), 349 to 358 (GPRSRSHTSE), and 359 to 368 (GSRSRSHTSE). The segment at 339–368 (GTRSRSHTSEGPRSRSHTSEGSRSRSHTSE) is 3 X 10 AA tandem repeats of G-[PST]-R-S-R-S-H-T-S-E. Threonine 340 carries the post-translational modification Phosphothreonine. Serine 342 carries the post-translational modification Phosphoserine. The segment covering 345 to 371 (HTSEGPRSRSHTSEGSRSRSHTSEDAR) has biased composition (basic and acidic residues). Phosphothreonine; by SGK1 is present on threonine 346. Residue serine 352 is modified to Phosphoserine. Residue threonine 356 is modified to Phosphothreonine; by SGK1. 2 positions are modified to phosphoserine: serine 362 and serine 364. Threonine 366 bears the Phosphothreonine; by SGK1 mark. A compositionally biased stretch (polar residues) spans 374–386 (ITPNSGATGNNAG). At threonine 375 the chain carries Phosphothreonine.

Belongs to the NDRG family. As to quaternary structure, interacts with RAB4A (membrane-bound form); the interaction involves NDRG1 in vesicular recycling of CDH1. Interacts with APOA1, APOA2, PRA1 and RTN1. In terms of processing, under stress conditions, phosphorylated in the C-terminal on many serine and threonine residues. Phosphorylated in vitro by PKA. Phosphorylation enhanced by increased intracellular cAMP levels. Homocysteine induces dephosphorylation. Phosphorylation by SGK1 is cell cycle dependent. In terms of tissue distribution, widely expressed, with highest levels in kidney followed by brain, pancreas, small intestine, colon and spleen (at protein level). Also detected in heart and preputial gland, and in much smaller quantities in other tissues. Not detected in duodenum and prostate. Highly expressed in Schwann cells.

The protein localises to the cytoplasm. It localises to the cytosol. The protein resides in the cytoskeleton. Its subcellular location is the microtubule organizing center. It is found in the centrosome. The protein localises to the nucleus. It localises to the cell membrane. In terms of biological role, stress-responsive protein involved in hormone responses, cell growth, and differentiation. Acts as a tumor suppressor in many cell types. Necessary but not sufficient for p53/TP53-mediated caspase activation and apoptosis. Required for vesicular recycling of CDH1 and TF. May also function in lipid trafficking. Protects cells from spindle disruption damage. Functions in p53/TP53-dependent mitotic spindle checkpoint. Regulates microtubule dynamics and maintains euploidy. Has a role in cell trafficking notably of the Schwann cell and is necessary for the maintenance and development of the peripheral nerve myelin sheath. This Mus musculus (Mouse) protein is Protein NDRG1 (Ndrg1).